The chain runs to 82 residues: Modifier of protein aggregation 4 (82 aa).

The span at 1 to 23 (MTRGNQRDLAREKNQKKLADQKK) shows a compositional bias: basic and acidic residues. 2 disordered regions span residues 1–41 (MTRG…MDAR) and 63–82 (EAAA…PLKM).

It belongs to the SERF family.

Its subcellular location is the cytoplasm. The protein resides in the cytosol. It localises to the nucleus. Positive regulator of protein aggregation and age-related proteotoxicity. Induces conformational changes in aggregation-prone proteins, driving them into compact formations preceding the formation of aggregates. The protein is Modifier of protein aggregation 4 of Caenorhabditis elegans.